The chain runs to 446 residues: Exodeoxyribonuclease 7 large subunit (446 aa).

Belongs to the XseA family. As to quaternary structure, heterooligomer composed of large and small subunits.

The protein resides in the cytoplasm. The enzyme catalyses Exonucleolytic cleavage in either 5'- to 3'- or 3'- to 5'-direction to yield nucleoside 5'-phosphates.. Bidirectionally degrades single-stranded DNA into large acid-insoluble oligonucleotides, which are then degraded further into small acid-soluble oligonucleotides. In Xanthomonas campestris pv. campestris (strain 8004), this protein is Exodeoxyribonuclease 7 large subunit.